A 649-amino-acid chain; its full sequence is 70 kDa protein (649 aa).

Disordered regions lie at residues 28-80 (LRRG…DFSP), 257-286 (ALSL…AASD), 311-359 (TATS…SKQQ), and 458-550 (QSAE…PSSL). Over residues 268 to 279 (KSTSPCNNSQLP) the composition is skewed to polar residues. Basic residues predominate over residues 330-349 (RLQRSLHLHSRSPHSSHFRP). The segment covering 504-515 (DVSNSETKNCPS) has biased composition (polar residues). Low complexity-rich tracts occupy residues 524 to 533 (PNHLHPLLPG) and 540 to 550 (PRQLSPSPSSL).

The protein belongs to the tymoviridae protein p69 family.

This Solanum lycopersicum (Tomato) protein is 70 kDa protein.